The primary structure comprises 293 residues: Acetylglutamate kinase (293 aa).

Substrate is bound by residues 66–67, R88, and N190; that span reads GG.

The protein belongs to the acetylglutamate kinase family. ArgB subfamily.

The protein localises to the cytoplasm. It carries out the reaction N-acetyl-L-glutamate + ATP = N-acetyl-L-glutamyl 5-phosphate + ADP. The protein operates within amino-acid biosynthesis; L-arginine biosynthesis; N(2)-acetyl-L-ornithine from L-glutamate: step 2/4. Catalyzes the ATP-dependent phosphorylation of N-acetyl-L-glutamate. This Thiobacillus denitrificans (strain ATCC 25259 / T1) protein is Acetylglutamate kinase.